Consider the following 93-residue polypeptide: Small ribosomal subunit protein uS19 (93 aa).

This sequence belongs to the universal ribosomal protein uS19 family.

Functionally, protein S19 forms a complex with S13 that binds strongly to the 16S ribosomal RNA. The protein is Small ribosomal subunit protein uS19 of Mycobacterium tuberculosis (strain ATCC 25177 / H37Ra).